Consider the following 154-residue polypeptide: Probable cyclic pyranopterin monophosphate synthase (154 aa).

Substrate is bound by residues 74-76 (LCH) and 110-111 (ME). Residue D125 is part of the active site.

It belongs to the MoaC family. In terms of assembly, homohexamer; trimer of dimers.

The enzyme catalyses (8S)-3',8-cyclo-7,8-dihydroguanosine 5'-triphosphate = cyclic pyranopterin phosphate + diphosphate. It participates in cofactor biosynthesis; molybdopterin biosynthesis. Functionally, catalyzes the conversion of (8S)-3',8-cyclo-7,8-dihydroguanosine 5'-triphosphate to cyclic pyranopterin monophosphate (cPMP). In Methanosphaerula palustris (strain ATCC BAA-1556 / DSM 19958 / E1-9c), this protein is Probable cyclic pyranopterin monophosphate synthase.